The primary structure comprises 204 residues: Ribonuclease HII (204 aa).

The region spanning 1–197 (MILGIDEAGR…KNCILNPKLL (197 aa)) is the RNase H type-2 domain. A divalent metal cation-binding residues include Asp-6, Glu-7, and Asp-103.

It belongs to the RNase HII family. It depends on Mn(2+) as a cofactor. The cofactor is Mg(2+).

The protein localises to the cytoplasm. It catalyses the reaction Endonucleolytic cleavage to 5'-phosphomonoester.. Functionally, endonuclease that specifically degrades the RNA of RNA-DNA hybrids. This is Ribonuclease HII from Helicobacter pylori (strain P12).